A 1494-amino-acid chain; its full sequence is B-cell CLL/lymphoma 9-like protein (1494 aa).

Disordered regions lie at residues 1 to 236 (MRIL…PPSQ) and 269 to 496 (VPRA…DMGQ). Residues 20 to 37 (GSPPLSPRGHCPPAPAKP) are compositionally biased toward pro residues. A phosphoserine mark is found at Ser-21 and Ser-25. Position 36 is an N6-acetyllysine (Lys-36). Composition is skewed to polar residues over residues 45-70 (TNHGKTGNGGAQSQHQNVNQGPTCNL) and 85-96 (NQISPSNSSLKN). Position 88 is a phosphoserine (Ser-88). Lys-108 and Lys-110 each carry N6-acetyllysine. Composition is skewed to basic and acidic residues over residues 114-126 (ERSVSVDSGEQRE) and 134-153 (SEAKEVAPRSKRRCVLERKQ). Ser-116 and Ser-118 each carry phosphoserine. At Lys-137 the chain carries N6-acetyllysine. Residues 193-207 (PGQTAQLPLSESSAP) are compositionally biased toward polar residues. 2 stretches are compositionally biased toward pro residues: residues 279–289 (KVPPTPEPLPL) and 299–322 (SQPPPLPPPPPAPGSAPPALPPEG). Positions 302–530 (PPLPPPPPAP…QEEYYEEKRR (229 aa)) are necessary for interaction with CTNNB1. The segment covering 348–360 (THPNTPTAATANN) has biased composition (low complexity). Over residues 396 to 418 (LSKEQLEHRERSLQTLRDIERLL) the composition is skewed to basic and acidic residues. A Phosphoserine modification is found at Ser-421. Phosphothreonine is present on Thr-511. Arg-677 carries the asymmetric dimethylarginine modification. A phosphoserine mark is found at Ser-747, Ser-810, Ser-912, Ser-923, Ser-935, Ser-939, Ser-944, Ser-972, Ser-984, Ser-988, Ser-994, Ser-1001, Ser-1007, and Ser-1014. Disordered regions lie at residues 905 to 1082 (RGLG…NPLS) and 1113 to 1206 (ELLP…PGGP). Residues 932 to 957 (PTLSQVHSPLVTSPSANLKSPQTPSQ) show a composition bias toward polar residues. The span at 974–993 (QVLSSSLGVRSPTGSPSRLK) shows a compositional bias: polar residues. Residues 1016-1035 (GVSQNKQPPLSINSSSTLGN) are compositionally biased toward polar residues. Over residues 1046-1059 (PRNSSSAPPANPSS) the composition is skewed to low complexity. A compositionally biased stretch (polar residues) spans 1060–1082 (GLMNPSLPFTSSPDPTPSQNPLS). Positions 1119-1129 (PLLPPPPPPQG) are enriched in pro residues. Residues 1133 to 1143 (GISNNQPNQMH) show a composition bias toward polar residues. Residues 1165–1176 (HEPPPTMLPSPT) show a composition bias toward pro residues. Lys-1339 participates in a covalent cross-link: Glycyl lysine isopeptide (Lys-Gly) (interchain with G-Cter in SUMO2).

It belongs to the BCL9 family. In terms of assembly, found in a complex with CDC73; CTNNB1 and PYGO1. Interacts with CTNNB1. In terms of tissue distribution, expressed in kidney, liver, lung, testis, brain, spleen, heart and skeletal muscle. Highly expressed in numerous colorectal tumors compared to corresponding non-cancerous tissues.

It is found in the nucleus. Its function is as follows. Transcriptional regulator that acts as an activator. Promotes beta-catenin transcriptional activity. Plays a role in tumorigenesis. Enhances the neoplastic transforming activity of CTNNB1. The chain is B-cell CLL/lymphoma 9-like protein (Bcl9l) from Mus musculus (Mouse).